The sequence spans 233 residues: Orotidine 5'-phosphate decarboxylase (233 aa).

Substrate is bound by residues Asp-12, Lys-34, Asp-61–Thr-70, Thr-120, Arg-181, Gln-190, Gly-210, and Arg-211. Catalysis depends on Lys-63, which acts as the Proton donor.

The protein belongs to the OMP decarboxylase family. Type 1 subfamily. In terms of assembly, homodimer.

The catalysed reaction is orotidine 5'-phosphate + H(+) = UMP + CO2. The protein operates within pyrimidine metabolism; UMP biosynthesis via de novo pathway; UMP from orotate: step 2/2. In terms of biological role, catalyzes the decarboxylation of orotidine 5'-monophosphate (OMP) to uridine 5'-monophosphate (UMP). The protein is Orotidine 5'-phosphate decarboxylase of Hahella chejuensis (strain KCTC 2396).